The primary structure comprises 1048 residues: B3 domain-containing protein Os02g0598200 (1048 aa).

A disordered region spans residues 1-345; sequence MDGAVRGQGC…QKERVASSDN (345 aa). The segment covering 16-25 has biased composition (basic residues); that stretch reads SFNKTKKKNR. 6 stretches are compositionally biased toward basic and acidic residues: residues 26-134, 151-162, 169-214, 243-253, 281-295, and 332-345; these read NCSD…SDDM, KKNSRNDADEEK, CSDD…GDKK, KNMKSDGDSYK, AKER…MEMK, and LKRE…SSDN. The TF-B3 1 DNA-binding region spans 375 to 468; that stretch reads AFAFFKFVRD…TFSVRVFGID (94 aa). The tract at residues 505–528 is disordered; it reads QYQDSEDIHDGPNVSGESPRSKEP. The TF-B3 2 DNA-binding region spans 953–1048; sequence LQFCIPSTIQ…LAFQVYITRK (96 aa).

It is found in the nucleus. The chain is B3 domain-containing protein Os02g0598200 from Oryza sativa subsp. japonica (Rice).